The chain runs to 180 residues: Hypoxanthine-guanine phosphoribosyltransferase (180 aa).

Diphosphate-binding residues include K43 and G44. E99 and D100 together coordinate Mg(2+). The active-site Proton acceptor is the D103. GMP-binding positions include K131, 152-153 (FV), and D159. R165 contributes to the diphosphate binding site.

Belongs to the purine/pyrimidine phosphoribosyltransferase family. Mg(2+) is required as a cofactor.

The protein resides in the cytoplasm. It catalyses the reaction IMP + diphosphate = hypoxanthine + 5-phospho-alpha-D-ribose 1-diphosphate. It carries out the reaction GMP + diphosphate = guanine + 5-phospho-alpha-D-ribose 1-diphosphate. Its pathway is purine metabolism; IMP biosynthesis via salvage pathway; IMP from hypoxanthine: step 1/1. It participates in purine metabolism; GMP biosynthesis via salvage pathway; GMP from guanine: step 1/1. In terms of biological role, purine salvage pathway enzyme that catalyzes the transfer of the ribosyl-5-phosphate group from 5-phospho-alpha-D-ribose 1-diphosphate (PRPP) to the N9 position of the 6-oxopurines hypoxanthine and guanine to form the corresponding ribonucleotides IMP (inosine 5'-monophosphate) and GMP (guanosine 5'-monophosphate), with the release of PPi. The sequence is that of Hypoxanthine-guanine phosphoribosyltransferase (hprT) from Bacillus subtilis (strain 168).